The following is a 296-amino-acid chain: MHVPVLLEELILALEINPKGFYVDLTLGRGGHSLAILEKISNGKLVVFDKDQDALDQTRPKLLALKQNIEIIWSDFSRFDFYLENLGIQFVDGFIIDLGVSSPQIDDPARGFSYSKDGNLDMRMDKSQKLSAFIVLNEYPYEKLVEIFFKYGQIPYAREIARAIINSRPLKTTFELVNLVKKVIPALVLVKKNFIKNVFQAVRIEVNNELDSLQKLLEKLPKFLKQGSKVAIITFHSLEDRIVKKAFLDLIRKDKLEFFQKGLPKFSMKVFRPKANELKSNPRAKSAKLRLLLQNR.

S-adenosyl-L-methionine is bound by residues G30–H32, D49, F76, D97, and Q104.

It belongs to the methyltransferase superfamily. RsmH family.

Its subcellular location is the cytoplasm. It catalyses the reaction cytidine(1402) in 16S rRNA + S-adenosyl-L-methionine = N(4)-methylcytidine(1402) in 16S rRNA + S-adenosyl-L-homocysteine + H(+). Functionally, specifically methylates the N4 position of cytidine in position 1402 (C1402) of 16S rRNA. In Mesomycoplasma hyopneumoniae (strain 232) (Mycoplasma hyopneumoniae), this protein is Ribosomal RNA small subunit methyltransferase H.